The chain runs to 389 residues: MPGVANSGPSTSSRETANPCSRKKVHFGSIHDAVRAGDVKQLSEIVCLHWLLWHGADITHVTTRGWTASHIAAIRGQDACVQALIMNGANLTAQDDRGCTPLHLAATHGHSFTLQIMLRSGVDPSVTDKREWRPVHYAAFHGRLGCLQLLVKWGCSIEDVDYNGNLPVHLAAMEGHLHCFKFLVSRMSSATQVLKAFNDNGENVLDLAQRFFKQNILQFIQGAEYEGKDLEDQETLAFPGHVAAFKGDLGMLKKLVEDGVININERADNGSTPMHKAAGQGHIECLQWLIKMGADSNITNKAGERPSDVAKRFAHLAAVKLLEELQKYDIDDENEIDENDVKYFIRHGVEGSTDAKDDLCLSDLDKTDARRPSKNCRASWSMNDYVEKN.

A disordered region spans residues methionine 1 to serine 21. The segment covering serine 7 to proline 19 has biased composition (polar residues). ANK repeat units follow at residues valine 25–histidine 60, arginine 64–alanine 93, arginine 97–valine 126, arginine 130–aspartate 159, asparagine 163–glutamine 192, asparagine 200–aspartate 232, threonine 235–glutamate 265, asparagine 269–isoleucine 298, and alanine 302–aspartate 332.

This chain is Ankyrin repeat domain-containing protein 42 (ANKRD42), found in Homo sapiens (Human).